The chain runs to 153 residues: Large ribosomal subunit protein uL13 (153 aa).

Belongs to the universal ribosomal protein uL13 family. Part of the 50S ribosomal subunit.

In terms of biological role, this protein is one of the early assembly proteins of the 50S ribosomal subunit, although it is not seen to bind rRNA by itself. It is important during the early stages of 50S assembly. In Methylobacterium nodulans (strain LMG 21967 / CNCM I-2342 / ORS 2060), this protein is Large ribosomal subunit protein uL13.